We begin with the raw amino-acid sequence, 166 residues long: Protein UL5 (166 aa).

In terms of assembly, interacts with host IQGAP1.

The protein resides in the host cytoplasm. Functionally, may play a role in rearrangement of cellular cytoskeleton towards an efficient viral assembly and spreading. In Human cytomegalovirus (strain Merlin) (HHV-5), this protein is Protein UL5 (UL5).